We begin with the raw amino-acid sequence, 129 residues long: Histone H2B.2 (129 aa).

Positions 1-19 (MAPKAEKKPASKAPAEKKP) are enriched in basic and acidic residues. The interval 1-38 (MAPKAEKKPASKAPAEKKPAAKKTATSGTKKRSKTRKE) is disordered. 2 positions are modified to N6-acetyllysine; alternate: Lys7 and Lys8. Glycyl lysine isopeptide (Lys-Gly) (interchain with G-Cter in SUMO); alternate cross-links involve residues Lys7 and Lys8. At Ser11 the chain carries Phosphoserine. At Lys12 the chain carries N6-acetyllysine. Lys17 carries the post-translational modification N6-acetyllysine; alternate. Lys17 is covalently cross-linked (Glycyl lysine isopeptide (Lys-Gly) (interchain with G-Cter in SUMO); alternate). Lys18 participates in a covalent cross-link: Glycyl lysine isopeptide (Lys-Gly) (interchain with G-Cter in SUMO). A Glycyl lysine isopeptide (Lys-Gly) (interchain with G-Cter in ubiquitin) cross-link involves residue Lys123.

The protein belongs to the histone H2B family. The nucleosome is a histone octamer containing two molecules each of H2A, H2B, H3 and H4 assembled in one H3-H4 heterotetramer and two H2A-H2B heterodimers. The octamer wraps approximately 147 bp of DNA. Post-translationally, monoubiquitinated by the UBC2-BRE1 complex to form H2BK123ub1. H2BK123ub1 gives a specific tag for epigenetic transcriptional activation and is also prerequisite for H3K4me and H3K79me formation. H2BK123ub1 also modulates the formation of double-strand breaks during meiosis and is a prerequisite for DNA-damage checkpoint activation. Phosphorylated by STE20 to form H2BS10ph during progression through meiotic prophase. May be correlated with chromosome condensation. In terms of processing, acetylated by GCN5 to form H2BK11ac and H2BK16ac. H2BK16ac can also be formed by ESA1. Acetylation of N-terminal lysines and particularly formation of H2BK11acK16ac has a positive effect on transcription. Post-translationally, sumoylation to form H2BK6su or H2BK7su, and probably also H2BK16su or H2BK17su, occurs preferentially near the telomeres and represses gene transcription.

The protein localises to the nucleus. Its subcellular location is the chromosome. Its function is as follows. Core component of nucleosome. Nucleosomes wrap and compact DNA into chromatin, limiting DNA accessibility to the cellular machineries which require DNA as a template. Histones thereby play a central role in transcription regulation, DNA repair, DNA replication and chromosomal stability. DNA accessibility is regulated via a complex set of post-translational modifications of histones, also called histone code, and nucleosome remodeling. The sequence is that of Histone H2B.2 (HTB2) from Debaryomyces hansenii (strain ATCC 36239 / CBS 767 / BCRC 21394 / JCM 1990 / NBRC 0083 / IGC 2968) (Yeast).